Reading from the N-terminus, the 243-residue chain is Anti-H(O) lectin 1 (243 aa).

An N-linked (GlcNAc...) asparagine; partial glycan is attached at asparagine 10. The N-linked (GlcNAc...) asparagine glycan is linked to asparagine 116. Residues glutamate 126 and aspartate 128 each coordinate Mn(2+). Residues aspartate 128, asparagine 135, and aspartate 138 each coordinate Ca(2+). 2 residues coordinate Mn(2+): aspartate 138 and histidine 143.

The protein belongs to the leguminous lectin family.

Functionally, L-fucose specific lectin. The sequence is that of Anti-H(O) lectin 1 from Ulex europaeus (Furze).